A 468-amino-acid polypeptide reads, in one-letter code: Phosphoglucosamine mutase (468 aa).

The Phosphoserine intermediate role is filled by serine 112. The Mg(2+) site is built by serine 112, aspartate 254, aspartate 256, and aspartate 258. Position 112 is a phosphoserine (serine 112).

Belongs to the phosphohexose mutase family. It depends on Mg(2+) as a cofactor. Post-translationally, activated by phosphorylation.

It carries out the reaction alpha-D-glucosamine 1-phosphate = D-glucosamine 6-phosphate. Catalyzes the conversion of glucosamine-6-phosphate to glucosamine-1-phosphate. This chain is Phosphoglucosamine mutase, found in Prochlorococcus marinus (strain MIT 9303).